A 339-amino-acid chain; its full sequence is Heme A synthase (339 aa).

The next 8 membrane-spanning stretches (helical) occupy residues V7–I27, H92–I112, I126–L146, L159–I179, A199–I219, V254–F274, A291–V311, and P312–Y332. Residue H258 participates in heme binding. H319 provides a ligand contact to heme.

The protein belongs to the COX15/CtaA family. Type 2 subfamily. In terms of assembly, interacts with CtaB. Requires heme b as cofactor.

The protein resides in the cell membrane. The catalysed reaction is Fe(II)-heme o + 2 A + H2O = Fe(II)-heme a + 2 AH2. Its pathway is porphyrin-containing compound metabolism; heme A biosynthesis; heme A from heme O: step 1/1. Its function is as follows. Catalyzes the conversion of heme O to heme A by two successive hydroxylations of the methyl group at C8. The first hydroxylation forms heme I, the second hydroxylation results in an unstable dihydroxymethyl group, which spontaneously dehydrates, resulting in the formyl group of heme A. In Flavobacterium psychrophilum (strain ATCC 49511 / DSM 21280 / CIP 103535 / JIP02/86), this protein is Heme A synthase.